A 227-amino-acid chain; its full sequence is 7-cyano-7-deazaguanine synthase (227 aa).

ATP is bound at residue 7-17; sequence LSGGLDSSTIL. 4 residues coordinate Zn(2+): cysteine 191, cysteine 199, cysteine 202, and cysteine 205.

The protein belongs to the QueC family. It depends on Zn(2+) as a cofactor.

It catalyses the reaction 7-carboxy-7-deazaguanine + NH4(+) + ATP = 7-cyano-7-deazaguanine + ADP + phosphate + H2O + H(+). The protein operates within purine metabolism; 7-cyano-7-deazaguanine biosynthesis. In terms of biological role, catalyzes the ATP-dependent conversion of 7-carboxy-7-deazaguanine (CDG) to 7-cyano-7-deazaguanine (preQ(0)). The polypeptide is 7-cyano-7-deazaguanine synthase (Trichormus variabilis (strain ATCC 29413 / PCC 7937) (Anabaena variabilis)).